Here is a 183-residue protein sequence, read N- to C-terminus: Potassium-transporting ATPase KdpC subunit (183 aa).

The helical transmembrane segment at 11 to 31 (LALLMTLLTGVLYPLAVTGVA) threads the bilayer.

It belongs to the KdpC family. In terms of assembly, the system is composed of three essential subunits: KdpA, KdpB and KdpC.

Its subcellular location is the cell inner membrane. In terms of biological role, part of the high-affinity ATP-driven potassium transport (or Kdp) system, which catalyzes the hydrolysis of ATP coupled with the electrogenic transport of potassium into the cytoplasm. This subunit acts as a catalytic chaperone that increases the ATP-binding affinity of the ATP-hydrolyzing subunit KdpB by the formation of a transient KdpB/KdpC/ATP ternary complex. The protein is Potassium-transporting ATPase KdpC subunit of Pseudomonas putida (strain GB-1).